The following is a 1227-amino-acid chain: Tyrosine-protein kinase receptor ver-3 (1227 aa).

A signal peptide spans 1–17 (MKLKLTVLLILVHASAS). The Extracellular segment spans residues 18–764 (YKPPAIEVED…VQVNNAPKGS (747 aa)). Positions 20–110 (PPAIEVEDYQ…RESDTGTYSC (91 aa)) constitute an Ig-like C2-type 1 domain. An intrachain disulfide couples Cys-52 to Cys-110. N-linked (GlcNAc...) asparagine glycosylation is found at Asn-119, Asn-211, Asn-245, Asn-255, Asn-381, Asn-425, and Asn-528. The Ig-like C2-type 2 domain maps to 200-325 (VNFECRYKKE…EHENKETKYT (126 aa)). An intrachain disulfide couples Cys-204 to Cys-313. 2 consecutive Ig-like C2-type domains span residues 565–666 (PHHE…TSID) and 673–758 (PSIT…VQVN). 2 cysteine pairs are disulfide-bonded: Cys-592–Cys-650 and Cys-696–Cys-740. N-linked (GlcNAc...) asparagine glycosylation is present at Asn-697. A helical transmembrane segment spans residues 765-785 (LFFYWFLALLLLISIIAVFLL). The Cytoplasmic portion of the chain corresponds to 786-1227 (TCKLRASNRL…ERYLIVESHA (442 aa)). The region spanning 847–1175 (LEILNPIGSG…HMRDSSSQFL (329 aa)) is the Protein kinase domain. Residues 853–861 (IGSGHFGVV) and Lys-886 each bind ATP. Catalysis depends on Asp-1030, which acts as the Proton acceptor. The disordered stretch occupies residues 1194–1227 (DWIQDSRPDVPNVSFQKSPKKQKEERYLIVESHA). A compositionally biased stretch (basic and acidic residues) spans 1214–1227 (KQKEERYLIVESHA).

The protein belongs to the protein kinase superfamily. Tyr protein kinase family. In terms of tissue distribution, expressed in the ALA neuron.

The protein localises to the cell membrane. The catalysed reaction is L-tyrosyl-[protein] + ATP = O-phospho-L-tyrosyl-[protein] + ADP + H(+). In terms of biological role, receptor tyrosine kinase which may be involved, downstream of pvf-1, in the positioning of ray 1, the most anterior ray sensillum in the male tail. The chain is Tyrosine-protein kinase receptor ver-3 from Caenorhabditis elegans.